Consider the following 102-residue polypeptide: uncharacterized protein (102 aa).

The segment at 1-102 is disordered; the sequence is MPVEQDGLTG…LANIREQNHQ (102 aa).

This is an uncharacterized protein from Caenorhabditis elegans.